Here is a 391-residue protein sequence, read N- to C-terminus: MSIVRMTDLALSGKRVLIRQDLNVPIDQGRITSEQRIIASLPTIRVALERGAAVMVTSHLGRPKEGVWSEEDSLAPVAKRLSQLLGIEVPLRRDWVDGVQVAPGQLVLLENCRMNVGEAENDEALARKYAALCDVFVMDAFGTAHRAQASTHGVICCAAIAAGGPLLMAELDALSRGLEHPVKPLLAIVGGSKVSTKLELLSNLVNNVEQLITGGGIANTFLAAAGYSIGKSLYEGDLIETAREIITAAKARGAEIPLPTDVVVAKQFLPGVTATVKTVDAIVADDLILDIGPQTARHYAALIETAATVVWNGPVGVFEFDAFSKGTEVLARAVAASSAFSIAGGGDTLAAIDKYGVADQISYISTGGGAFLEFLEGKTLPAVAALQARSG.

Substrate is bound by residues 21-23, Arg-36, 59-62, Arg-113, and Arg-146; these read DLN and HLGR. Residues Lys-197, Glu-319, and 345–348 each bind ATP; that span reads GGDT.

The protein belongs to the phosphoglycerate kinase family. In terms of assembly, monomer.

The protein localises to the cytoplasm. It catalyses the reaction (2R)-3-phosphoglycerate + ATP = (2R)-3-phospho-glyceroyl phosphate + ADP. The protein operates within carbohydrate degradation; glycolysis; pyruvate from D-glyceraldehyde 3-phosphate: step 2/5. The protein is Phosphoglycerate kinase of Xylella fastidiosa (strain 9a5c).